Reading from the N-terminus, the 1135-residue chain is Envelopment polyprotein (1135 aa).

A signal peptide spans M1 to A35. Residues K36–T314 lie on the Lumenal side of the membrane. Positions R41 to D43 match the Cell attachment site motif. 2 cysteine pairs are disulfide-bonded: C114–C145 and C122–C156. Residue N116 is glycosylated (N-linked (GlcNAc...) asparagine; by host). Positions L177–L195 are non-covalent dimerization. N210 carries an N-linked (GlcNAc...) asparagine; by host glycan. C224 and C285 are disulfide-bonded. A helical membrane pass occupies residues A315 to C366. The Cytoplasmic segment spans residues L367 to S484. The segment at L437–S484 is signal for signal peptide peptidase. The Lumenal segment spans residues K485–R1067. N-linked (GlcNAc...) asparagine; by host glycosylation is found at N588, N605, and N980. Residues V1068 to I1088 traverse the membrane as a helical segment. Topologically, residues C1089–V1135 are cytoplasmic.

The protein belongs to the tospovirus envelope glycoprotein family. As to quaternary structure, homodimer; disulfide-linked. Heterodimer with Glycoprotein C. Interacts with nucleoprotein. Heterodimer with Glycoprotein N. Interacts with nucleoprotein. Post-translationally, specific enzymatic cleavages in vivo yield mature proteins including Glycoprotein N and Glycoprotein C. In terms of processing, glycosylated with O-linked glycans. Glycosylation is essential for proper subcellular location. Cleaved at acidic pH.

It is found in the virion membrane. Its subcellular location is the host Golgi apparatus membrane. It localises to the host endoplasmic reticulum membrane. Its function is as follows. Forms the spikes present at the surface of the virion together with Glycoprotein C. They are able to attach the virion to a cell receptor and to promote fusion of membranes after endocytosis of the virion. Plays a role in virus binding and/or entry into the vector midgut. Functionally, forms the spikes present at the surface of the virion together with Glycoprotein N. They are able to attach the virion to a cell receptor and to promote fusion of membranes after endocytosis of the virion. Probable class II fusion protein. This chain is Envelopment polyprotein (GP), found in Tomato spotted wilt virus (strain Regular2A) (TSWV).